Consider the following 416-residue polypeptide: Glutamate dehydrogenase (416 aa).

Residue Lys-105 is part of the active site.

Belongs to the Glu/Leu/Phe/Val dehydrogenases family. Homohexamer.

The catalysed reaction is L-glutamate + NAD(+) + H2O = 2-oxoglutarate + NH4(+) + NADH + H(+). It catalyses the reaction L-glutamate + NADP(+) + H2O = 2-oxoglutarate + NH4(+) + NADPH + H(+). The chain is Glutamate dehydrogenase (gdhA) from Thermotoga maritima (strain ATCC 43589 / DSM 3109 / JCM 10099 / NBRC 100826 / MSB8).